Consider the following 137-residue polypeptide: Large ribosomal subunit protein uL16 (137 aa).

This sequence belongs to the universal ribosomal protein uL16 family. In terms of assembly, part of the 50S ribosomal subunit.

Its function is as follows. Binds 23S rRNA and is also seen to make contacts with the A and possibly P site tRNAs. This is Large ribosomal subunit protein uL16 from Stenotrophomonas maltophilia (strain K279a).